Here is a 238-residue protein sequence, read N- to C-terminus: Ribitol-5-phosphate cytidylyltransferase 1 (238 aa).

CTP-binding positions include 7–10 and 81–87; these read LAGG and GSDRNDT.

It belongs to the IspD/TarI cytidylyltransferase family. TarI subfamily.

The catalysed reaction is D-ribitol 5-phosphate + CTP + H(+) = CDP-L-ribitol + diphosphate. The protein operates within cell wall biogenesis; poly(ribitol phosphate) teichoic acid biosynthesis. Functionally, catalyzes the transfer of the cytidylyl group of CTP to D-ribitol 5-phosphate. The sequence is that of Ribitol-5-phosphate cytidylyltransferase 1 from Staphylococcus aureus (strain USA300).